The sequence spans 282 residues: Bifunctional protein FolD (282 aa).

NADP(+) is bound by residues 165–167 (GAS) and isoleucine 231.

This sequence belongs to the tetrahydrofolate dehydrogenase/cyclohydrolase family. In terms of assembly, homodimer.

It carries out the reaction (6R)-5,10-methylene-5,6,7,8-tetrahydrofolate + NADP(+) = (6R)-5,10-methenyltetrahydrofolate + NADPH. The enzyme catalyses (6R)-5,10-methenyltetrahydrofolate + H2O = (6R)-10-formyltetrahydrofolate + H(+). It participates in one-carbon metabolism; tetrahydrofolate interconversion. Functionally, catalyzes the oxidation of 5,10-methylenetetrahydrofolate to 5,10-methenyltetrahydrofolate and then the hydrolysis of 5,10-methenyltetrahydrofolate to 10-formyltetrahydrofolate. This Francisella tularensis subsp. mediasiatica (strain FSC147) protein is Bifunctional protein FolD.